A 293-amino-acid polypeptide reads, in one-letter code: Nitrogenase iron protein (293 aa).

ATP is bound at residue 10-17 (GKGGIGKS). Cys98 is a [4Fe-4S] cluster binding site. Arg101 is subject to ADP-ribosylarginine; by dinitrogenase reductase ADP-ribosyltransferase. Position 133 (Cys133) interacts with [4Fe-4S] cluster.

It belongs to the NifH/BchL/ChlL family. In terms of assembly, homodimer. The cofactor is [4Fe-4S] cluster. The reversible ADP-ribosylation of Arg-101 inactivates the nitrogenase reductase and regulates nitrogenase activity.

The catalysed reaction is N2 + 8 reduced [2Fe-2S]-[ferredoxin] + 16 ATP + 16 H2O = H2 + 8 oxidized [2Fe-2S]-[ferredoxin] + 2 NH4(+) + 16 ADP + 16 phosphate + 6 H(+). Its function is as follows. The key enzymatic reactions in nitrogen fixation are catalyzed by the nitrogenase complex, which has 2 components: the iron protein and the molybdenum-iron protein. This chain is Nitrogenase iron protein, found in Pectobacterium atrosepticum (strain SCRI 1043 / ATCC BAA-672) (Erwinia carotovora subsp. atroseptica).